The chain runs to 445 residues: Phosphoglucosamine mutase (445 aa).

Ser-102 functions as the Phosphoserine intermediate in the catalytic mechanism. Mg(2+)-binding residues include Ser-102, Asp-241, Asp-243, and Asp-245. A Phosphoserine modification is found at Ser-102.

It belongs to the phosphohexose mutase family. Mg(2+) is required as a cofactor. Activated by phosphorylation.

It catalyses the reaction alpha-D-glucosamine 1-phosphate = D-glucosamine 6-phosphate. Catalyzes the conversion of glucosamine-6-phosphate to glucosamine-1-phosphate. This Cronobacter sakazakii (strain ATCC BAA-894) (Enterobacter sakazakii) protein is Phosphoglucosamine mutase.